An 863-amino-acid polypeptide reads, in one-letter code: Leucine--tRNA ligase (863 aa).

Residues 42–52 carry the 'HIGH' region motif; it reads PYPSGRLHMGH. The short motif at 622–626 is the 'KMSKS' region element; it reads KMSKS. Lysine 625 contributes to the ATP binding site.

Belongs to the class-I aminoacyl-tRNA synthetase family.

The protein localises to the cytoplasm. It carries out the reaction tRNA(Leu) + L-leucine + ATP = L-leucyl-tRNA(Leu) + AMP + diphosphate. The protein is Leucine--tRNA ligase of Shewanella loihica (strain ATCC BAA-1088 / PV-4).